A 343-amino-acid polypeptide reads, in one-letter code: METSKKLVIVAVLSITLILTYAYLISIIEGVDYFTALYFSVITITTTGYGDFTPKTFLGRTLTVVYLCVGVGIVMYLFSLIAEFIVEGKFEEFVRLKKMKNKIKTLKDHYIICGYGRLGKVVGEKFIEENIPFIAIDINEDVLKEEYEKYPDKFLYIVGDAKKEEVLKKAKIDKAKGLIATLPSDADNVFLTLTARELNPNILITAKADEKEAIRKLKIAGANRVVSPYLIGGLRMAEVSVRPGILDFLSTFIKIAKDEYEEDIELRKFVIEKDSELAYKSLKDANIRGKTGATILGIRREKEFCINPYPEFILKPGDVIYAFGTEENLKYLENLVKKKKKKL.

Topologically, residues 1–7 (METSKKL) are cytoplasmic. Residues 8-28 (VIVAVLSITLILTYAYLISII) form a helical membrane-spanning segment. Residues 29-61 (EGVDYFTALYFSVITITTTGYGDFTPKTFLGRT) are Extracellular-facing. Residues 46–51 (TTGYGD) carry the Selectivity filter motif. A helical membrane pass occupies residues 62 to 82 (LTVVYLCVGVGIVMYLFSLIA). The Cytoplasmic portion of the chain corresponds to 83–343 (EFIVEGKFEE…NLVKKKKKKL (261 aa)). In terms of domain architecture, RCK N-terminal spans 107 to 227 (KDHYIICGYG…KIAGANRVVS (121 aa)). Positions 253 to 338 (IKIAKDEYEE…LKYLENLVKK (86 aa)) constitute an RCK C-terminal domain.

Its subcellular location is the cell membrane. Probable potassium channel protein. The chain is Probable potassium channel protein 2 from Methanocaldococcus jannaschii (strain ATCC 43067 / DSM 2661 / JAL-1 / JCM 10045 / NBRC 100440) (Methanococcus jannaschii).